Consider the following 279-residue polypeptide: Aquaporin A (279 aa).

Topologically, residues 1–40 (MVKVVPLRFITYDPLKDPSKMIYRRPISKPVKAFKGFFSE) are cytoplasmic. A helical transmembrane segment spans residues 41-61 (FLGTLYLVYFCGGSVCAAFAV). Residues 62–69 (AGDSAARA) lie on the Extracellular side of the membrane. A helical membrane pass occupies residues 70–90 (LLGGLIQGMALAALIWAVSGV). Over 91–114 (SGCNLNPAVTLANLLSGRVGLIDS) the chain is Cytoplasmic. The short motif at 96 to 98 (NPA) is the NPA 1 element. The chain crosses the membrane as a helical span at residues 115 to 135 (LYYVAAQILGCIAGAGILYGC). The Extracellular portion of the chain corresponds to 136–158 (LPNMYRIDLGVPHLAPGMNTGQA). Residues 159-179 (FLMEMMLTSILCLCVLGTSVF) form a helical membrane-spanning segment. Topologically, residues 180–188 (NVWDRRLNR) are cytoplasmic. A helical membrane pass occupies residues 189 to 209 (IAPFAIGLALFIGVAIGFNFS). At 210-227 (GGALNPVRVLGPSIISGV) the chain is on the extracellular side. The short motif at 214–216 (NPV) is the NPA 2 element. The chain crosses the membrane as a helical span at residues 228 to 248 (WSHHWVYWLGPIVGAILAAFI). The Cytoplasmic portion of the chain corresponds to 249-279 (YRCLLQERFDVIERPGYIAPLIDPSTAVSSY).

This sequence belongs to the MIP/aquaporin (TC 1.A.8) family.

The protein resides in the cell membrane. Its function is as follows. May form a water-specific channel. Required for prolonged spore survival on fruiting bodies. In Dictyostelium discoideum (Social amoeba), this protein is Aquaporin A (aqpA).